The following is a 545-amino-acid chain: Probable zinc metalloprotease EGY2, chloroplastic (545 aa).

A chloroplast-targeting transit peptide spans 1–63; the sequence is MQLPAMSCSP…QIRNRRFVCQ (63 aa). Positions 66–142 are disordered; it reads TETEPDGDGN…DATPASDAQE (77 aa). Residues 68–85 show a composition bias toward acidic residues; that stretch reads TEPDGDGNGDEEKEELGD. Composition is skewed to polar residues over residues 88 to 109 and 117 to 129; these read SSPS…TNAD and NTEP…TVQN. 7 helical membrane-spanning segments follow: residues 256-276, 300-320, 325-345, 363-383, 426-446, 473-493, and 513-533; these read AVPE…TLLL, VYGA…HILA, GIKL…FGAI, AAGP…GFIL, PLVL…IPAG, LLGI…LIFF, and YISI…PYPF.

It belongs to the peptidase M50B family.

The protein localises to the plastid. Its subcellular location is the chloroplast membrane. Probable membrane-associated metalloprotease that may be involved in chloroplast development. This chain is Probable zinc metalloprotease EGY2, chloroplastic (EGY2), found in Oryza sativa subsp. indica (Rice).